A 166-amino-acid polypeptide reads, in one-letter code: MGTKLVVYVLLFDVFLSLVVGAYSGIAPPSIPPVPTYASAQLTASLITWTVGWPPITLWPQITLIPPFSILGANFPGLTIPSLTIPGVTLFSISFSWLAPIIYIANWIIWVFQTVASVLSYLLNIFTGSVGLLSSVPVLGPFLTAFVLIVNFVLVWELIKLIRGSE.

In terms of biological role, this protein may be involved in virus assembly. Essential for virus function. This is an uncharacterized protein from Sulfolobus spindle-shape virus 1 (SSV1).